The chain runs to 201 residues: MSRYRGPRLKKIRRLGALPGLTSKGTRPGSDLRNQFRSGKRSQYRIRLEEKQKLRFHYGLTERQLLRYVHIAGKAKGSTGQVLLQLLEMRLDNILFRLGMAPTIPGARQLVNHRHILVNGRIVDIPSYRCKPRDIITTKDKQRSKVLIQNNMDSSTREELPKHLTLDSFQHKGLVNQIIDSKWVGLKINELLVVEYYSRQT.

Positions 89–150 constitute an S4 RNA-binding domain; it reads MRLDNILFRL…KQRSKVLIQN (62 aa).

This sequence belongs to the universal ribosomal protein uS4 family. In terms of assembly, part of the 30S ribosomal subunit. Contacts protein S5. The interaction surface between S4 and S5 is involved in control of translational fidelity.

Its subcellular location is the plastid. The protein localises to the chloroplast. Functionally, one of the primary rRNA binding proteins, it binds directly to 16S rRNA where it nucleates assembly of the body of the 30S subunit. Its function is as follows. With S5 and S12 plays an important role in translational accuracy. This chain is Small ribosomal subunit protein uS4c (rps4), found in Acorus calamus (Sweet flag).